The sequence spans 68 residues: Phycobilisome 7.8 kDa linker polypeptide, allophycocyanin-associated, core (68 aa).

The CpcD-like domain occupies S2–A57.

This sequence belongs to the phycobilisome linker protein family.

The protein localises to the cellular thylakoid membrane. Functionally, rod linker protein, associated with allophycocyanin. Linker polypeptides determine the state of aggregation and the location of the disk-shaped phycobiliprotein units within the phycobilisome and modulate their spectroscopic properties in order to mediate a directed and optimal energy transfer. This is Phycobilisome 7.8 kDa linker polypeptide, allophycocyanin-associated, core (apcC) from Nostoc sp. (strain PCC 7120 / SAG 25.82 / UTEX 2576).